A 347-amino-acid chain; its full sequence is Sesquiterpene synthase M422DRAFT_47084 (347 aa).

4 residues coordinate Mg(2+): aspartate 93, asparagine 228, serine 232, and glutamate 236. Positions 93–97 match the DDXXD motif motif; it reads DEYTD. (2E,6E)-farnesyl diphosphate is bound by residues arginine 318 and tyrosine 319.

The protein belongs to the terpene synthase family. The cofactor is Mg(2+).

It catalyses the reaction (2E,6E)-farnesyl diphosphate = viridiflorene + diphosphate. Terpene cyclase that catalyzes the cyclization of farnesyl diphosphate (FPP) to viridiflorene and viridiflorol. The sequence is that of Sesquiterpene synthase M422DRAFT_47084 from Sphaerobolus stellatus (strain SS14).